A 435-amino-acid chain; its full sequence is Elongation factor 1-alpha (435 aa).

The 222-residue stretch at 5 to 226 (KTHINLVVIG…DTMEPPKRPT (222 aa)) folds into the tr-type G domain. Residues 14 to 21 (GHVDSGKS) are G1. 14-21 (GHVDSGKS) contacts GTP. The tract at residues 70-74 (GITID) is G2. Residues 91-94 (DAPG) are G3. GTP is bound by residues 91–95 (DAPGH) and 151–154 (NKMD). Residues 151–154 (NKMD) are G4. The segment at 190–192 (SGF) is G5.

Belongs to the TRAFAC class translation factor GTPase superfamily. Classic translation factor GTPase family. EF-Tu/EF-1A subfamily.

The protein resides in the cytoplasm. This protein promotes the GTP-dependent binding of aminoacyl-tRNA to the A-site of ribosomes during protein biosynthesis. In Cryptosporidium parvum, this protein is Elongation factor 1-alpha.